We begin with the raw amino-acid sequence, 122 residues long: UPF0102 protein CKL_1410 (122 aa).

This sequence belongs to the UPF0102 family.

The sequence is that of UPF0102 protein CKL_1410 from Clostridium kluyveri (strain ATCC 8527 / DSM 555 / NBRC 12016 / NCIMB 10680 / K1).